We begin with the raw amino-acid sequence, 736 residues long: Catalase-peroxidase (736 aa).

The tryptophyl-tyrosyl-methioninium (Trp-Tyr) (with M-249) cross-link spans 100–223 (WHSAGTYRIG…LAAVQMGLIY (124 aa)). The Proton acceptor role is filled by His101. A cross-link (tryptophyl-tyrosyl-methioninium (Tyr-Met) (with W-100)) is located at residues 223 to 249 (YVNPEGPDGKPDPVAAARDIRETFRRM). His264 provides a ligand contact to heme b.

The protein belongs to the peroxidase family. Peroxidase/catalase subfamily. Homodimer or homotetramer. Requires heme b as cofactor. In terms of processing, formation of the three residue Trp-Tyr-Met cross-link is important for the catalase, but not the peroxidase activity of the enzyme.

The catalysed reaction is H2O2 + AH2 = A + 2 H2O. It catalyses the reaction 2 H2O2 = O2 + 2 H2O. Its function is as follows. Bifunctional enzyme with both catalase and broad-spectrum peroxidase activity. The protein is Catalase-peroxidase of Geobacillus kaustophilus (strain HTA426).